A 390-amino-acid polypeptide reads, in one-letter code: Heme chaperone HemW (390 aa).

The Radical SAM core domain occupies 15–254 (PMPGQPFGVY…DARLSAAGFA (240 aa)). Tyr-24 serves as a coordination point for S-adenosyl-L-methionine. Residues Cys-30, Cys-34, and Cys-37 each contribute to the [4Fe-4S] cluster site. S-adenosyl-L-methionine is bound by residues Gly-82, 83 to 84 (GT), Glu-115, Gln-142, Arg-154, and Asp-179.

Belongs to the anaerobic coproporphyrinogen-III oxidase family. HemW subfamily. [4Fe-4S] cluster is required as a cofactor.

It is found in the cytoplasm. Its function is as follows. Probably acts as a heme chaperone, transferring heme to an unknown acceptor. Binds one molecule of heme per monomer, possibly covalently. Binds 1 [4Fe-4S] cluster. The cluster is coordinated with 3 cysteines and an exchangeable S-adenosyl-L-methionine. The chain is Heme chaperone HemW from Mycobacterium tuberculosis (strain CDC 1551 / Oshkosh).